The primary structure comprises 277 residues: Putative hydroxypyruvate isomerase (277 aa).

Catalysis depends on proton donor/acceptor residues E150 and E249.

Belongs to the hyi family.

It catalyses the reaction 3-hydroxypyruvate = 2-hydroxy-3-oxopropanoate. Functionally, catalyzes the reversible isomerization between hydroxypyruvate and 2-hydroxy-3-oxopropanoate (also termed tartronate semialdehyde). The sequence is that of Putative hydroxypyruvate isomerase (HYI) from Homo sapiens (Human).